Here is a 733-residue protein sequence, read N- to C-terminus: Tyrosine-protein kinase ptk (733 aa).

2 helical membrane-spanning segments follow: residues 19-39 and 438-458; these read LFFS…LSLI and LQIL…LALL. 542–550 is an ATP binding site; it reads GPAPEVGKS.

It belongs to the etk/wzc family. Mg(2+) is required as a cofactor. It depends on Mn(2+) as a cofactor. Autophosphorylated on several Tyr residues. Dephosphorylated by ptp.

The protein resides in the cell inner membrane. It catalyses the reaction L-tyrosyl-[protein] + ATP = O-phospho-L-tyrosyl-[protein] + ADP + H(+). It participates in glycan metabolism; exopolysaccharide biosynthesis. In terms of biological role, may be involved in the production and the transport of exopolysaccharides. This is Tyrosine-protein kinase ptk (ptk) from Acinetobacter johnsonii.